A 968-amino-acid polypeptide reads, in one-letter code: MAFANFRRILRLSTFEKRKSREYEHVRRDLDPNEVWEIVGELGDGAFGKVYKAKNKETGALAAAKVIETKSEEELEDYIVEIEILATCDHPYIVKLLGAYYHDGKLWIMIEFCPGGAVDAIMLELDRGLTEPQIQVVCRQMLEALNFLHSKRIIHRDLKAGNVLMTLEGDIRLADFGVSAKNLKTLQKRDSFIGTPYWMAPEVVMCETMKDTPYDYKADIWSLGITLIEMAQIEPPHHELNPMRVLLKIAKSDPPTLLTPSKWSVEFRDFLKIALDKNPETRPSAAQLLEHPFVSSITSNKALRELVAEAKAEVMEEIEDGRDEGEEEDAVDAASTLENHTQNSSEVSPPSLNADKPLEESPSTPLAPSQSQDSVNEPCSQPSGDRSLQTTSPPVVAPGNENGLAVPVPLRKSRPVSMDARIQVAQEKQVAEQGGDLSPAANRSQKASQSRPNSSALETLGGEKLANGSLEPPAQAAPGPSKRDSDCSSLCTSESMDYGTNLSTDLSLNKEMGSLSIKDPKLYKKTLKRTRKFVVDGVEVSITTSKIISEDEKKDEEMRFLRRQELRELRLLQKEEHRNQTQLSNKHELQLEQMHKRFEQEINAKKKFFDTELENLERQQKQQVEKMEQDHAVRRREEARRIRLEQDRDYTRFQEQLKLMKKEVKNEVEKLPRQQRKESMKQKMEEHTQKKQLLDRDFVAKQKEDLELAMKRLTTDNRREICDKERECLMKKQELLRDREAALWEMEEHQLQERHQLVKQQLKDQYFLQRHELLRKHEKEREQMQRYNQRMIEQLKVRQQQEKARLPKIQRSEGKTRMAMYKKSLHINGGGSAAEQREKIKQFSQQEEKRQKSERLQQQQKHENQMRDMLAQCESNMSELQQLQNEKCHLLVEHETQKLKALDESHNQNLKEWRDKLRPRKKALEEDLNQKKREQEMFFKLSEEAECPNPSTPSKAAKFFPYSSADAS.

Phosphoserine is present on residues S13 and S20. One can recognise a Protein kinase domain in the interval 36–294 (WEIVGELGDG…AAQLLEHPFV (259 aa)). ATP-binding positions include 42–50 (LGDGAFGKV) and K65. Residue D157 is the Proton acceptor of the active site. Residues 175–224 (DFGVSAKNLKTLQKRDSFIGTPYWMAPEVVMCETMKDTPYDYKADIWSLG) form an activation segment region. S191 bears the Phosphoserine mark. 2 stretches are compositionally biased toward polar residues: residues 337–351 (LENHTQNSSEVSPPS) and 361–393 (SPSTPLAPSQSQDSVNEPCSQPSGDRSLQTTSP). Disordered stretches follow at residues 337-411 (LENH…VPLR) and 425-490 (AQEK…CSSL). 6 positions are modified to phosphoserine: S438, S450, S454, S485, S514, and S549. Over residues 441–457 (ANRSQKASQSRPNSSAL) the composition is skewed to polar residues. A coiled-coil region spans residues 573 to 947 (QKEEHRNQTQ…FFKLSEEAEC (375 aa)). 4 disordered regions span residues 668–690 (VEKLPRQQRKESMKQKMEEHTQK), 827–865 (INGGGSAAEQREKIKQFSQQEEKRQKSERLQQQQKHENQ), 910–929 (LKEWRDKLRPRKKALEEDLN), and 944–968 (EAECPNPSTPSKAAKFFPYSSADAS). Basic and acidic residues predominate over residues 835-865 (EQREKIKQFSQQEEKRQKSERLQQQQKHENQ). T952 carries the post-translational modification Phosphothreonine.

It belongs to the protein kinase superfamily. STE Ser/Thr protein kinase family. STE20 subfamily. Homodimer; homodimerization is required for activation segment autophosphorylation. Post-translationally, autophosphorylates following homodimerization, leading to activation of the protein. In terms of tissue distribution, highly expressed in rapidly proliferating tissues (spleen, placenta, and peripheral blood leukocytes). Also expressed in brain, heart, skeletal muscle, colon, thymus, kidney, liver, small intestine and lung.

It localises to the cell membrane. It carries out the reaction L-seryl-[protein] + ATP = O-phospho-L-seryl-[protein] + ADP + H(+). It catalyses the reaction L-threonyl-[protein] + ATP = O-phospho-L-threonyl-[protein] + ADP + H(+). Its activity is regulated as follows. Inhibited by the pyrrole-indolinone inhibitor SU11274 (K00593): intercalates between the ATP-binding Lys-65 and alpha-C glutamate (Glu-81), resulting in a partial disordering of the lysine side chain. Also specifically inhibited by erlotinib. Slightly inhibited by gefitinib. Its function is as follows. Serine/threonine-protein kinase involved in regulation of lymphocyte migration. Phosphorylates MSN, and possibly PLK1. Involved in regulation of lymphocyte migration by mediating phosphorylation of ERM proteins such as MSN. Acts as a negative regulator of MAP3K1/MEKK1. May also act as a cell cycle regulator by acting as a polo kinase kinase: mediates phosphorylation of PLK1 in vitro; however such data require additional evidences in vivo. The protein is Serine/threonine-protein kinase 10 (STK10) of Homo sapiens (Human).